A 113-amino-acid polypeptide reads, in one-letter code: Putative glycerol transporter Lin0367 (113 aa).

4 helical membrane passes run 3 to 23 (IGIA…IRMM), 30 to 50 (EWGA…VWTI), 63 to 83 (GTVW…ASLL), and 92 to 112 (VVNL…LSLF).

The protein localises to the membrane. Functionally, could be involved in the glycerol uptake either via facilitated diffusion or active transport. In Listeria innocua serovar 6a (strain ATCC BAA-680 / CLIP 11262), this protein is Putative glycerol transporter Lin0367.